The following is a 398-amino-acid chain: 1-deoxy-D-xylulose 5-phosphate reductoisomerase (398 aa).

Residues T10, G11, S12, V13, G36, K37, N38, and N124 each coordinate NADPH. K125 provides a ligand contact to 1-deoxy-D-xylulose 5-phosphate. E126 provides a ligand contact to NADPH. D150 contributes to the Mn(2+) binding site. 1-deoxy-D-xylulose 5-phosphate-binding residues include S151, E152, S186, and H209. E152 lines the Mn(2+) pocket. G215 lines the NADPH pocket. Residues S222, N227, K228, and E231 each coordinate 1-deoxy-D-xylulose 5-phosphate. E231 lines the Mn(2+) pocket.

The protein belongs to the DXR family. In terms of assembly, homodimer. Mg(2+) is required as a cofactor. Mn(2+) serves as cofactor.

The catalysed reaction is 2-C-methyl-D-erythritol 4-phosphate + NADP(+) = 1-deoxy-D-xylulose 5-phosphate + NADPH + H(+). Its pathway is isoprenoid biosynthesis; isopentenyl diphosphate biosynthesis via DXP pathway; isopentenyl diphosphate from 1-deoxy-D-xylulose 5-phosphate: step 1/6. Catalyzes the NADPH-dependent rearrangement and reduction of 1-deoxy-D-xylulose-5-phosphate (DXP) to 2-C-methyl-D-erythritol 4-phosphate (MEP). This is 1-deoxy-D-xylulose 5-phosphate reductoisomerase from Photorhabdus laumondii subsp. laumondii (strain DSM 15139 / CIP 105565 / TT01) (Photorhabdus luminescens subsp. laumondii).